The primary structure comprises 432 residues: Eukaryotic translation initiation factor 3 subunit M (432 aa).

Residues 184 to 356 form the PCI domain; that stretch reads EEEEAYQHIL…KVFLIHSVRY (173 aa). 2 stretches are compositionally biased toward basic and acidic residues: residues 392–401 and 423–432; these read AQQEAERKLV and QHRERNDNDD. The tract at residues 392-432 is disordered; it reads AQQEAERKLVEASTQHNNDRGNQRRGGNRGQQHRERNDNDD.

The protein belongs to the eIF-3 subunit M family. As to quaternary structure, component of the eukaryotic translation initiation factor 3 (eIF-3) complex.

Its subcellular location is the cytoplasm. In terms of biological role, component of the eukaryotic translation initiation factor 3 (eIF-3) complex, which is involved in protein synthesis of a specialized repertoire of mRNAs and, together with other initiation factors, stimulates binding of mRNA and methionyl-tRNAi to the 40S ribosome. The eIF-3 complex specifically targets and initiates translation of a subset of mRNAs involved in cell proliferation. This is Eukaryotic translation initiation factor 3 subunit M from Pyricularia oryzae (strain 70-15 / ATCC MYA-4617 / FGSC 8958) (Rice blast fungus).